The chain runs to 463 residues: MAVEKTMDKIVALCKNRGFVFPGSDIYGGLANSWDYGPLGVEFKNNVKKAWWKKFVQESPYNVGLDSAILMNREVWVASGHVGGFSDPLMDCKECKARFRADKLVEDHMTENGAEVATADGWTNEQLKEYIERNNIVCPKCGKMNYTDIRKFNLMFKTFQGVTEDAKSEMYLRPETAQGIFVNFKAVQRTSRKKVPFGIAQIGKSFRNEITPGNFTFRTREFEQMELEFFCKPGTDLEWHKYWKDYCWNFLLNLNVKAENLRMRDHGEEELSFYSNATSDIEYLFPFGWGELWGIADRTDYDLSKHQEHSGQDLSYLDQTTNEKYVPYVIEPSLGADRVALAFLIEAYDEEELEGGDVRTVMHLHPALAPFKAAILPLSKKLSEKSLDIYAELSKKFNLDFDETGSIGKRYRRQDEIGTPYCITIDFDTLEDESVTIRNRDTMEQERIKISEIENYIQASLEF.

Substrate is bound by residues arginine 100 and glutamate 175. ATP is bound by residues 207–209 (RNE), 217–222 (FRTREF), 291–292 (EL), and 335–338 (GADR). 222–226 (FEQME) contacts substrate. Substrate is bound at residue 331-335 (EPSLG).

Belongs to the class-II aminoacyl-tRNA synthetase family. In terms of assembly, homodimer.

The protein resides in the cytoplasm. The catalysed reaction is tRNA(Gly) + glycine + ATP = glycyl-tRNA(Gly) + AMP + diphosphate. Its function is as follows. Catalyzes the attachment of glycine to tRNA(Gly). This chain is Glycine--tRNA ligase, found in Clostridium beijerinckii (strain ATCC 51743 / NCIMB 8052) (Clostridium acetobutylicum).